The primary structure comprises 325 residues: Protein translocase subunit SecF (325 aa).

The next 6 helical transmembrane spans lie at 36–56 (GYILSALLMVISLFFIITKGF), 148–168 (LAQGAVYATLATLAMVLIYVG), 175–197 (LGFGSIASLAHDVIITLGVFSAL), 202–224 (DLTFVAAILSVVGYSINDSIVVF), 254–274 (TIITSVTTLVVVMALFFFGGP), and 281–301 (LALLVGIGFGTYSSIFVAIAI).

It belongs to the SecD/SecF family. SecF subfamily. As to quaternary structure, forms a complex with SecD. Part of the essential Sec protein translocation apparatus which comprises SecA, SecYEG and auxiliary proteins SecDF-YajC and YidC.

The protein resides in the cell inner membrane. Its function is as follows. Part of the Sec protein translocase complex. Interacts with the SecYEG preprotein conducting channel. SecDF uses the proton motive force (PMF) to complete protein translocation after the ATP-dependent function of SecA. The chain is Protein translocase subunit SecF from Haemophilus influenzae (strain ATCC 51907 / DSM 11121 / KW20 / Rd).